The primary structure comprises 92 residues: RIIa domain-containing protein 1 (92 aa).

The RIIa domain maps to 43–77 (KEVELLISGFFREMFLKRPDNIPEFAADYFTDPRL).

This chain is RIIa domain-containing protein 1 (RIIAD1), found in Bos taurus (Bovine).